Consider the following 458-residue polypeptide: GEAGRDGMGDTGRDSRSPDSSSPNPLSQGIPPSSPPGPPHTPSAPPPPMPPPPLGSPFPVISSSMGSPGLPPPAPPGFSGPVSSPQINSTVSLPGGGSGPPEDVKPPVLGVRGLHCPPPPGGPGAGKRLCAICGDRSSGKHYGVYSCEGCKGFFKRTIRKDLTYSCRDNKDCTVDKRQRNRCQYCRYQKCLATGMKREAVQEERQRGKDKDGDGDGAGGAPEEMPVDRILEAELAVEQKSDQGVEGPGATGGGGSSPNDPVTNICQAADKQLFTLVEWAKRIPHFSSLPLDDQVILLRAGWNELLIASFSHRSIDVRDGILLATGLHVHRNSAHSAGVGAIFDRVLTELVSKMRDMRMDKTELGCLRAIILFNPDAKGLSNPGEVEILREKVYASLETYCKQKYPEQQGRFAKLLLRLPALRSIGLKCLEHLFFFKLIGDTPIDTFLMEMLEAPHQLA.

Positions 1–17 (GEAGRDGMGDTGRDSRS) are enriched in basic and acidic residues. The disordered stretch occupies residues 1–105 (GEAGRDGMGD…GGSGPPEDVK (105 aa)). A modulating region spans residues 1–129 (GEAGRDGMGD…PGGPGAGKRL (129 aa)). The span at 18-31 (PDSSSPNPLSQGIP) shows a compositional bias: low complexity. Pro residues predominate over residues 32-56 (PSSPPGPPHTPSAPPPPMPPPPLGS). Low complexity predominate over residues 57–68 (PFPVISSSMGSP). Residues 69-78 (GLPPPAPPGF) show a composition bias toward pro residues. 2 NR C4-type zinc fingers span residues 130 to 150 (CAIC…CEGC) and 166 to 190 (CRDN…YQKC). The nuclear receptor DNA-binding region spans 130 to 195 (CAICGDRSSG…RYQKCLATGM (66 aa)). Residues 196–220 (KREAVQEERQRGKDKDGDGDGAGGA) form a hinge region. Basic and acidic residues predominate over residues 201 to 213 (QEERQRGKDKDGD). Disordered stretches follow at residues 201-223 (QEER…APEE) and 238-261 (QKSD…NDPV). An NR LBD domain is found at 221-454 (PEEMPVDRIL…TFLMEMLEAP (234 aa)). Residues 245–255 (EGPGATGGGGS) show a composition bias toward gly residues.

The protein belongs to the nuclear hormone receptor family. NR2 subfamily. In terms of assembly, homodimer (in vitro). Heterodimer with other retinoic acid receptor family members. Binds DNA preferentially as a RAR/RXR heterodimer. Interacts with NR1H3. Interacts with AKAP13. In terms of tissue distribution, expressed in the adrenal gland with main expression in the zona fasciculata (at protein level).

The protein resides in the nucleus. It localises to the cytoplasm. Functionally, receptor for retinoic acid. Retinoic acid receptors bind as heterodimers to their target response elements in response to their ligands, all-trans or 9-cis retinoic acid, and regulate gene expression in various biological processes. The RAR/RXR heterodimers bind to the retinoic acid response elements (RARE). This Rattus norvegicus (Rat) protein is Retinoic acid receptor RXR-beta (Rxrb).